Consider the following 429-residue polypeptide: Histidinol dehydrogenase (429 aa).

The NAD(+) site is built by Tyr131, Gln193, and Asn216. Ser239, Gln261, and His264 together coordinate substrate. Residues Gln261 and His264 each contribute to the Zn(2+) site. Residues Glu327 and His328 each act as proton acceptor in the active site. Substrate contacts are provided by His328, Asp361, Glu415, and His420. Asp361 provides a ligand contact to Zn(2+). His420 is a binding site for Zn(2+).

This sequence belongs to the histidinol dehydrogenase family. Zn(2+) serves as cofactor.

It catalyses the reaction L-histidinol + 2 NAD(+) + H2O = L-histidine + 2 NADH + 3 H(+). It participates in amino-acid biosynthesis; L-histidine biosynthesis; L-histidine from 5-phospho-alpha-D-ribose 1-diphosphate: step 9/9. Its function is as follows. Catalyzes the sequential NAD-dependent oxidations of L-histidinol to L-histidinaldehyde and then to L-histidine. This Methanocaldococcus jannaschii (strain ATCC 43067 / DSM 2661 / JAL-1 / JCM 10045 / NBRC 100440) (Methanococcus jannaschii) protein is Histidinol dehydrogenase (hisD).